Consider the following 515-residue polypeptide: Mucin-like protein Glc1.8a (515 aa).

The N-terminal stretch at 1–20 is a signal peptide; the sequence is MSQITLIILILAIGFSCTKS. Residues 21–467 lie on the Extracellular side of the membrane; that stretch reads HPINSTRDGE…ANDIKKPAFP (447 aa). N-linked (GlcNAc...) asparagine; by host glycosylation is found at asparagine 24, asparagine 45, asparagine 51, asparagine 60, asparagine 85, asparagine 93, asparagine 102, asparagine 123, asparagine 129, asparagine 138, asparagine 180, asparagine 201, asparagine 207, asparagine 216, asparagine 258, asparagine 279, asparagine 285, asparagine 319, asparagine 327, asparagine 336, asparagine 357, asparagine 363, asparagine 372, asparagine 397, asparagine 405, asparagine 413, asparagine 434, and asparagine 441. A disordered region spans residues 80-114; sequence SKKDENITGQSEINTSAKSQPINSTRDGEDSGTDL. Residues 86–104 are compositionally biased toward polar residues; that stretch reads ITGQSEINTSAKSQPINST. The tract at residues 314–358 is disordered; that stretch reads SKKDENVTGQSEINTSAKSQPINSTRDGEDSGTDLKNLLTDPANT. Over residues 320–338 the composition is skewed to polar residues; it reads VTGQSEINTSAKSQPINST. The disordered stretch occupies residues 393-413; sequence RKDENVTGQSEFNISTNSNLN. Residues 468–488 traverse the membrane as a helical segment; sequence YCIILITFQIVTVGMIIYLVF. Residues 489-515 lie on the Cytoplasmic side of the membrane; the sequence is RTMRKPCQSERAIPLNTFGFGNNSSHE.

This sequence belongs to the polydnaviridae Glc1.8 protein family.

It is found in the host membrane. Involved in suppression of the insect cellular immune response. Inhibits host hemocyte adhesion and phagocytosis. The chain is Mucin-like protein Glc1.8a (O9) from Microplitis demolitor (Parasitoid wasp).